Here is an 897-residue protein sequence, read N- to C-terminus: Leucine--tRNA ligase (897 aa).

Positions 49–59 (PYPSGKLHMGH) match the 'HIGH' region motif. Residues 654–658 (KMSKS) carry the 'KMSKS' region motif. Lys657 contributes to the ATP binding site.

This sequence belongs to the class-I aminoacyl-tRNA synthetase family.

It localises to the cytoplasm. It carries out the reaction tRNA(Leu) + L-leucine + ATP = L-leucyl-tRNA(Leu) + AMP + diphosphate. This chain is Leucine--tRNA ligase, found in Methylibium petroleiphilum (strain ATCC BAA-1232 / LMG 22953 / PM1).